The following is a 166-amino-acid chain: Small ribosomal subunit protein uS3m (166 aa).

The transit peptide at 1 to 25 (MLRSLQHVESHINQCRRISTTSTLL) directs the protein to the mitochondrion.

This sequence belongs to the universal ribosomal protein uS3 family. As to quaternary structure, component of the mitochondrial ribosome small subunit (28S) which comprises a 12S rRNA and about 30 distinct proteins.

The protein localises to the mitochondrion. In Caenorhabditis briggsae, this protein is Small ribosomal subunit protein uS3m (mrps-24).